We begin with the raw amino-acid sequence, 138 residues long: Centromere protein S (138 aa).

N-acetylmethionine is present on Met1. The disordered stretch occupies residues 110 to 138; the sequence is RKAQKKKKSEDGSKNSRQPAEAGVVESEN.

Belongs to the TAF9 family. CENP-S/MHF1 subfamily. In terms of assembly, heterodimer with CENPX, sometimes called MHF; this interaction stabilizes both partners. MHF heterodimers can assemble to form tetrameric structures. MHF also coassemble with CENPT-CENPW heterodimers at centromeres to form the tetrameric CENP-T-W-S-X complex. Forms a discrete complex with FANCM and CENPX, called FANCM-MHF; this interaction, probably mediated by direct binding between CENPS and FANCM, leads to synergistic activation of double-stranded DNA binding and strongly stimulates FANCM-mediated DNA remodeling. Recruited by FANCM to the Fanconi anemia (FA) core complex, which consists of CENPS, CENPX, FANCA, FANCB, FANCC, FANCE, FANCF, FANCG, FANCL, FANCM, FAAP24 and FAAP100. The FA core complex associates with Bloom syndrome (BLM) complex, which consists of at least BLM, DNA topoisomerase 3-alpha (TOP3A), RMI1/BLAP75, RPA1/RPA70 and RPA2/RPA32. The super complex between FA and BLM is called BRAFT. Component of the CENPA-CAD complex, composed of CENPI, CENPK, CENPL, CENPO, CENPP, CENPQ, CENPR and CENPS. The CENPA-CAD complex is probably recruited on centromeres by the CENPA-NAC complex, composed of at least CENPA, CENPC, CENPH, CENPM, CENPN, CENPT and CENPU. In terms of tissue distribution, ubiquitously expressed.

It localises to the nucleus. Its subcellular location is the chromosome. It is found in the centromere. The protein resides in the kinetochore. Functionally, DNA-binding component of the Fanconi anemia (FA) core complex. Required for the normal activation of the FA pathway, leading to monoubiquitination of the FANCI-FANCD2 complex in response to DNA damage, cellular resistance to DNA cross-linking drugs, and prevention of chromosomal breakage. In complex with CENPX (MHF heterodimer), crucial cofactor for FANCM in both binding and ATP-dependent remodeling of DNA. Stabilizes FANCM. In complex with CENPX and FANCM (but not other FANC proteins), rapidly recruited to blocked forks and promotes gene conversion at blocked replication forks. In complex with CENPT, CENPW and CENPX (CENP-T-W-S-X heterotetramer), involved in the formation of a functional kinetochore outer plate, which is essential for kinetochore-microtubule attachment and faithful mitotic progression. As a component of MHF and CENP-T-W-S-X complexes, binds DNA and bends it to form a nucleosome-like structure. DNA-binding function is fulfilled in the presence of CENPX, with the following preference for DNA substates: Holliday junction &gt; double-stranded &gt; splay arm &gt; single-stranded. Does not bind DNA on its own. The sequence is that of Centromere protein S (CENPS) from Homo sapiens (Human).